Consider the following 201-residue polypeptide: uncharacterized protein (201 aa).

A disordered region spans residues 53–74 (PKKNTAHKNSTTSTVASSGNTT). The segment covering 59–74 (HKNSTTSTVASSGNTT) has biased composition (polar residues). A bHLH domain is found at 88-136 (AKRLSHKEVERRRREAISEGIKELANIVPGCEKNKGSILQRTAQYIRSL).

It localises to the nucleus. This is an uncharacterized protein from Schizosaccharomyces pombe (strain 972 / ATCC 24843) (Fission yeast).